The primary structure comprises 274 residues: Thiamine kinase (274 aa).

It belongs to the thiamine kinase family.

It catalyses the reaction thiamine + ATP = thiamine phosphate + ADP + H(+). It functions in the pathway cofactor biosynthesis; thiamine diphosphate biosynthesis; thiamine phosphate from thiamine: step 1/1. Catalyzes the ATP-dependent phosphorylation of thiamine to thiamine phosphate. Is involved in thiamine salvage. The chain is Thiamine kinase from Shigella dysenteriae serotype 1 (strain Sd197).